Consider the following 661-residue polypeptide: Heme transporter BhuA (661 aa).

A signal peptide spans 1-23 (MKFTRTLVLASTFLLATVATSQA). Positions 48 to 159 (KDNIEATGGT…AAGAIRYETV (112 aa)) constitute a TBDR plug domain. In terms of domain architecture, TBDR beta-barrel spans 170-661 (TFGARIIGSY…TFTFQTAFKF (492 aa)).

Belongs to the TonB-dependent receptor family.

The protein localises to the cell outer membrane. Its function is as follows. Heme transporter. This Brucella suis biovar 1 (strain 1330) protein is Heme transporter BhuA (bhuA).